A 574-amino-acid polypeptide reads, in one-letter code: Protein OBERON 2 (574 aa).

Composition is skewed to polar residues over residues 1–10 (MGTSSGSNHP) and 65–76 (SMSQKTEPDSME). Residues 1–76 (MGTSSGSNHP…SQKTEPDSME (76 aa)) form a disordered region. The PHD-type zinc finger occupies 226-291 (LCMCTICNKF…VFKCRACNRT (66 aa)). The stretch at 416 to 524 (KKARMALETC…LFEKIKLQEN (109 aa)) forms a coiled coil.

In terms of assembly, self-interacts. Interacts with OBE1, OBE3 and OBE4. Binds to VPg of pea seed borne mosaic virus (PSbMV), turnip mosaic virus (TuMV) and lettuce mosaic virus (LMV), but not with VPg of tobacco etch virus (TEV), cowpea mosaic virus (CPMV), tomato black ring virus (TBRV) and grapevine fan leaf virus (GFLV). In terms of tissue distribution, expressed in roots, seedlings, stems, leaves, flowers and siliques, especially in the vasculature.

The protein localises to the nucleus. In terms of biological role, probable transcription factor that acts together with OBE1 for the maintenance and/or establishment of both the shoot and root meristems, probably by controlling the expression of the meristem genes such as WUS, PLT1 and PLT2 and of genes required for auxin responses. Promotes cell meristematic activity via the WUSCHEL-CLAVATA pathway. Involved in the development of the basal pole and in auxin-mediated root and vascular development in the embryo. Confers sensitivity to turnip mosaic virus (TuMV) probably by promoting viral movement and multiplication via interaction with TuMV VPg. This Arabidopsis thaliana (Mouse-ear cress) protein is Protein OBERON 2.